The sequence spans 374 residues: Queuine tRNA-ribosyltransferase (374 aa).

The Proton acceptor role is filled by aspartate 89. Residues 89-93 (DSGGF), aspartate 143, glutamine 187, and glycine 214 each bind substrate. The tract at residues 245–251 (GVGKPED) is RNA binding. Catalysis depends on aspartate 264, which acts as the Nucleophile. The RNA binding; important for wobble base 34 recognition stretch occupies residues 269–273 (TRNAR). Residues cysteine 302, cysteine 304, cysteine 307, and histidine 333 each contribute to the Zn(2+) site.

It belongs to the queuine tRNA-ribosyltransferase family. Homodimer. Within each dimer, one monomer is responsible for RNA recognition and catalysis, while the other monomer binds to the replacement base PreQ1. Zn(2+) serves as cofactor.

The enzyme catalyses 7-aminomethyl-7-carbaguanine + guanosine(34) in tRNA = 7-aminomethyl-7-carbaguanosine(34) in tRNA + guanine. The protein operates within tRNA modification; tRNA-queuosine biosynthesis. Its function is as follows. Catalyzes the base-exchange of a guanine (G) residue with the queuine precursor 7-aminomethyl-7-deazaguanine (PreQ1) at position 34 (anticodon wobble position) in tRNAs with GU(N) anticodons (tRNA-Asp, -Asn, -His and -Tyr). Catalysis occurs through a double-displacement mechanism. The nucleophile active site attacks the C1' of nucleotide 34 to detach the guanine base from the RNA, forming a covalent enzyme-RNA intermediate. The proton acceptor active site deprotonates the incoming PreQ1, allowing a nucleophilic attack on the C1' of the ribose to form the product. After dissociation, two additional enzymatic reactions on the tRNA convert PreQ1 to queuine (Q), resulting in the hypermodified nucleoside queuosine (7-(((4,5-cis-dihydroxy-2-cyclopenten-1-yl)amino)methyl)-7-deazaguanosine). This is Queuine tRNA-ribosyltransferase from Serratia proteamaculans (strain 568).